We begin with the raw amino-acid sequence, 74 residues long: Large ribosomal subunit protein uL29 (74 aa).

It belongs to the universal ribosomal protein uL29 family.

In Streptomyces griseus subsp. griseus (strain JCM 4626 / CBS 651.72 / NBRC 13350 / KCC S-0626 / ISP 5235), this protein is Large ribosomal subunit protein uL29.